A 443-amino-acid chain; its full sequence is Tubulin beta chain (443 aa).

GTP is bound by residues Q11, E69, S138, G142, T143, G144, N204, and N226. E69 provides a ligand contact to Mg(2+). The tract at residues 424–443 (QYQDASAEEEGEFEGEEEEA) is disordered. Over residues 429 to 443 (SAEEEGEFEGEEEEA) the composition is skewed to acidic residues.

The protein belongs to the tubulin family. As to quaternary structure, dimer of alpha and beta chains. A typical microtubule is a hollow water-filled tube with an outer diameter of 25 nm and an inner diameter of 15 nM. Alpha-beta heterodimers associate head-to-tail to form protofilaments running lengthwise along the microtubule wall with the beta-tubulin subunit facing the microtubule plus end conferring a structural polarity. Microtubules usually have 13 protofilaments but different protofilament numbers can be found in some organisms and specialized cells. It depends on Mg(2+) as a cofactor.

It is found in the cytoplasm. The protein localises to the cytoskeleton. Tubulin is the major constituent of microtubules, a cylinder consisting of laterally associated linear protofilaments composed of alpha- and beta-tubulin heterodimers. Microtubules grow by the addition of GTP-tubulin dimers to the microtubule end, where a stabilizing cap forms. Below the cap, tubulin dimers are in GDP-bound state, owing to GTPase activity of alpha-tubulin. In Chlamydomonas incerta, this protein is Tubulin beta chain (TUBB).